A 942-amino-acid polypeptide reads, in one-letter code: UvrABC system protein A (942 aa).

Residue 32–39 (GLSGSGKS) coordinates ATP. The segment at 251–278 (CPVCGFTVPELEPRLFSFNAPFGSCPTC) adopts a C4-type zinc-finger fold. ABC transporter domains are found at residues 308–589 (WNPI…KKSI) and 609–937 (GNGR…HYLK). ATP is bound at residue 641-648 (GVSGSGKS). A C4-type zinc finger spans residues 740-766 (CEACSGDGIIKIEMHFLPDVYVPCEVC).

Belongs to the ABC transporter superfamily. UvrA family. As to quaternary structure, forms a heterotetramer with UvrB during the search for lesions.

It localises to the cytoplasm. In terms of biological role, the UvrABC repair system catalyzes the recognition and processing of DNA lesions. UvrA is an ATPase and a DNA-binding protein. A damage recognition complex composed of 2 UvrA and 2 UvrB subunits scans DNA for abnormalities. When the presence of a lesion has been verified by UvrB, the UvrA molecules dissociate. The protein is UvrABC system protein A of Streptococcus pyogenes serotype M1.